A 262-amino-acid chain; its full sequence is 3-methyl-2-oxobutanoate hydroxymethyltransferase (262 aa).

Mg(2+) contacts are provided by Asp42 and Asp81. 3-methyl-2-oxobutanoate contacts are provided by residues 42–43, Asp81, and Lys110; that span reads DS. Glu112 contacts Mg(2+). The Proton acceptor role is filled by Glu179.

Belongs to the PanB family. As to quaternary structure, homodecamer; pentamer of dimers. Requires Mg(2+) as cofactor.

The protein localises to the cytoplasm. It catalyses the reaction 3-methyl-2-oxobutanoate + (6R)-5,10-methylene-5,6,7,8-tetrahydrofolate + H2O = 2-dehydropantoate + (6S)-5,6,7,8-tetrahydrofolate. It functions in the pathway cofactor biosynthesis; (R)-pantothenate biosynthesis; (R)-pantoate from 3-methyl-2-oxobutanoate: step 1/2. Catalyzes the reversible reaction in which hydroxymethyl group from 5,10-methylenetetrahydrofolate is transferred onto alpha-ketoisovalerate to form ketopantoate. This chain is 3-methyl-2-oxobutanoate hydroxymethyltransferase, found in Methylobacillus flagellatus (strain ATCC 51484 / DSM 6875 / VKM B-1610 / KT).